The following is a 329-amino-acid chain: Terpene synthase 7 (329 aa).

The DDxx(x)D/E motif motif lies at 99 to 104 (DDLYLE). The NDxxSxxxD/E motif signature appears at 230-238 (NDIHSFNKE).

The protein belongs to the terpene synthase family.

In terms of biological role, terpene synthase that converts its substrate farnesyl diphosphate (FPP) into 6 yet unidentified sesquiterpenes. This Dictyostelium purpureum (Slime mold) protein is Terpene synthase 7.